Reading from the N-terminus, the 742-residue chain is Tegument protein UL47 (742 aa).

A compositionally biased stretch (basic and acidic residues) spans 1 to 10; sequence MDAARDGRPE. Disordered stretches follow at residues 1-128 and 155-199; these read MDAA…TAHL and EFPP…DDAA. Positions 10–30 match the Nuclear localization signal motif; that stretch reads ERRPRRSGTYRTHPFQRPSAR. A compositionally biased stretch (low complexity) spans 18 to 37; it reads TYRTHPFQRPSARRSLLDAL. The span at 38–62 shows a compositional bias: basic and acidic residues; it reads RAADAEAAERPRVRRPRPDFQRPPD. Acidic residues predominate over residues 63–88; the sequence is EDTSEDENVYDYIDGDSSDSADDYDS. The Nuclear export signal motif lies at 95–122; that stretch reads RGPNHGAGDAMDTDAPPERAPEGGAPQD. The Nuclear export signal signature appears at 485 to 495; the sequence is LSAYLTLFVAL.

It belongs to the alphaherpesvirinae HHV-1 UL47 family. As to quaternary structure, interacts with US3 kinase. Interacts with UL31 and UL34; these interactions seem important for efficient virion nuclear egress. Interacts with UL41/VHS. Phosphorylated by US3. This phosphorylation is required for proper nuclear localization.

It localises to the virion tegument. The protein localises to the host nucleus. The protein resides in the host cytoplasm. Its function is as follows. Tegument protein that can bind to various RNA transcripts. Plays a role in the attenuation of selective viral and cellular mRNA degradation by modulating the activity of host shutoff RNase UL41/VHS. Also plays a role in the primary envelopment of virions in the perinuclear space, probably by interacting with two nuclear egress proteins UL31 and UL34. The polypeptide is Tegument protein UL47 (Bos taurus (Bovine)).